We begin with the raw amino-acid sequence, 549 residues long: Lipase 1 (549 aa).

A signal peptide spans 1 to 15 (MELALALSLIASVAA). An intrachain disulfide couples C75 to C112. S224 acts as the Acyl-ester intermediate in catalysis. An intrachain disulfide couples C283 to C292. Residue N329 is glycosylated (N-linked (GlcNAc...) asparagine). Residue E356 is the Charge relay system of the active site. Residue N366 is glycosylated (N-linked (GlcNAc...) asparagine). Catalysis depends on H464, which acts as the Charge relay system.

Belongs to the type-B carboxylesterase/lipase family.

The enzyme catalyses a triacylglycerol + H2O = a diacylglycerol + a fatty acid + H(+). The chain is Lipase 1 (LIP1) from Diutina rugosa (Yeast).